We begin with the raw amino-acid sequence, 420 residues long: MQSSTQKQAGSLTIVGSGIESISQITLQSLSHIEAASKVFYCVVDPATEAYLLAKNKNCVDLYQYYDNGKPRMDTYIQMAEVMLREVRNGLDIVGVFYGHPGVFVNPSQRAIAIAKSEGYQARMLPGISAEDCLFADLGIDPCNPGCVSYEASDFLIRERPVNVSSHFILWQVGCIGVADFTFVKFNNSKFGVLLDRLEHEYGADHTVVHYIAAVLPYENPVIDKLTISQLRDTEVAKRVSGISTFYIPPKELKDPSMDIMRRLELLAADQVPDKQWHFYPTNQWAPSAPNVVPYGPIEQAAIVQLGSHTIPEQFQPIATSKAMTDILTKLALDPKMLTEYKADRRAFAQSALELTVNERDALEMGTFWALRCAMKKMPSSFMDEVDANNLPVVAVVGVAVGAVAVTVVVSLNDLTDSVN.

The tract at residues 1-251 (MQSSTQKQAG…GISTFYIPPK (251 aa)) is methyltransferase domain. Residues Arg-72, Tyr-76, and Tyr-98 contribute to the active site. Residues Tyr-98, His-100, Val-103, Ala-130, Gln-172, Ala-213, Ser-244, and Thr-245 each coordinate S-adenosyl-L-methionine. The tract at residues 252 to 378 (ELKDPSMDIM…WALRCAMKKM (127 aa)) is clasp domain. Positions 379-392 (PSSFMDEVDANNLP) are precursor leader. N-methylvaline is present on residues Val-394 and Val-396. Gly-398 is modified (N-methylglycine). Val-399 is modified (N-methylvaline). Ala-400 is modified (N-methylalanine). At Gly-402 the chain carries N-methylglycine. Val-404, Val-406, Val-408, and Val-410 each carry N-methylvaline.

The protein in the N-terminal section; belongs to the precorrin methyltransferase family. Homodimer. GymMA1 automethylates at Val-394, Val-396, Gly-398, Val-399, Ala-400, Gly-402, Val-404, Val-406, Val-408 and Val-410 before being processed by a prolyloligopeptidase which likely forms a peptidyl ester upon removal of the follower propeptide, which then undergoes macrocyclization with the N-terminus of the modified core peptide. Peptide backbone alpha-N-methylations change the physicochemical properties of amide bonds to provide structural constraints and other favorable characteristics including biological membrane permeability to peptides.

The protein operates within mycotoxin biosynthesis. Fusion protein of the methyltransferase gymM1 and the gymnopeptides precursor; part of the gene cluster that mediates the biosynthesis of gymnopeptides, highly methylated cyclic octadecapeptides with striking antiproliferative activity on several human cancer cell lines. Gymnopeptides derive from the C-terminus of the gymMA1 protein, and it is the gymMA1 protein that methylates its own C-terminus using S-adenosyl methionine (SAM). The C-terminus is subsequently cleaved off and macrocyclized by a prolyloligopeptidase to give the final product. The polypeptide is Methyltransferase/ribosomally synthesized cyclic peptide gymnopeptides precursor gymMA1 (Gymnopus fusipes (Spindle toughshank)).